We begin with the raw amino-acid sequence, 345 residues long: Anthranilate phosphoribosyltransferase (345 aa).

5-phospho-alpha-D-ribose 1-diphosphate contacts are provided by residues Gly80, 83–84 (GD), Thr88, 90–93 (NIST), 108–116 (KHGNRSVSS), and Ser120. Gly80 contacts anthranilate. Position 92 (Ser92) interacts with Mg(2+). An anthranilate-binding site is contributed by Asn111. Arg166 provides a ligand contact to anthranilate. Residues Asp225 and Glu226 each contribute to the Mg(2+) site.

Belongs to the anthranilate phosphoribosyltransferase family. Homodimer. Mg(2+) serves as cofactor.

It carries out the reaction N-(5-phospho-beta-D-ribosyl)anthranilate + diphosphate = 5-phospho-alpha-D-ribose 1-diphosphate + anthranilate. It functions in the pathway amino-acid biosynthesis; L-tryptophan biosynthesis; L-tryptophan from chorismate: step 2/5. In terms of biological role, catalyzes the transfer of the phosphoribosyl group of 5-phosphorylribose-1-pyrophosphate (PRPP) to anthranilate to yield N-(5'-phosphoribosyl)-anthranilate (PRA). This chain is Anthranilate phosphoribosyltransferase, found in Pelotomaculum thermopropionicum (strain DSM 13744 / JCM 10971 / SI).